A 415-amino-acid polypeptide reads, in one-letter code: Serine--tRNA ligase (415 aa).

Thr231 to Glu233 is an L-serine binding site. An ATP-binding site is contributed by Arg262–Glu264. Glu285 contributes to the L-serine binding site. Glu349–Ser352 is a binding site for ATP. L-serine is bound at residue Ser383.

It belongs to the class-II aminoacyl-tRNA synthetase family. Type-1 seryl-tRNA synthetase subfamily. In terms of assembly, homodimer. The tRNA molecule binds across the dimer.

It is found in the cytoplasm. It catalyses the reaction tRNA(Ser) + L-serine + ATP = L-seryl-tRNA(Ser) + AMP + diphosphate + H(+). The catalysed reaction is tRNA(Sec) + L-serine + ATP = L-seryl-tRNA(Sec) + AMP + diphosphate + H(+). The protein operates within aminoacyl-tRNA biosynthesis; selenocysteinyl-tRNA(Sec) biosynthesis; L-seryl-tRNA(Sec) from L-serine and tRNA(Sec): step 1/1. Its function is as follows. Catalyzes the attachment of serine to tRNA(Ser). Is also able to aminoacylate tRNA(Sec) with serine, to form the misacylated tRNA L-seryl-tRNA(Sec), which will be further converted into selenocysteinyl-tRNA(Sec). This chain is Serine--tRNA ligase, found in Helicobacter pylori (strain ATCC 700392 / 26695) (Campylobacter pylori).